The primary structure comprises 472 residues: Adenosylhomocysteinase (472 aa).

Substrate contacts are provided by Thr-64, Asp-138, and Glu-198. Thr-199–Thr-201 lines the NAD(+) pocket. Residues Lys-228 and Asp-232 each contribute to the substrate site. NAD(+) is bound by residues Asn-233, Gly-262–Gly-267, Glu-285, Asn-320, Ile-341–His-343, and Asn-386.

Belongs to the adenosylhomocysteinase family. NAD(+) serves as cofactor.

It is found in the cytoplasm. It carries out the reaction S-adenosyl-L-homocysteine + H2O = L-homocysteine + adenosine. The protein operates within amino-acid biosynthesis; L-homocysteine biosynthesis; L-homocysteine from S-adenosyl-L-homocysteine: step 1/1. In terms of biological role, may play a key role in the regulation of the intracellular concentration of adenosylhomocysteine. This chain is Adenosylhomocysteinase, found in Prochlorococcus marinus subsp. pastoris (strain CCMP1986 / NIES-2087 / MED4).